We begin with the raw amino-acid sequence, 278 residues long: Large ribosomal subunit protein uL2 (278 aa).

2 disordered regions span residues 29 to 57 and 224 to 278; these read PEKS…QGGG and VAMN…NKKR. Positions 258–278 are enriched in basic residues; sequence RSPKKASNKYIVRRRKTNKKR.

It belongs to the universal ribosomal protein uL2 family. In terms of assembly, part of the 50S ribosomal subunit. Forms a bridge to the 30S subunit in the 70S ribosome.

Its function is as follows. One of the primary rRNA binding proteins. Required for association of the 30S and 50S subunits to form the 70S ribosome, for tRNA binding and peptide bond formation. It has been suggested to have peptidyltransferase activity; this is somewhat controversial. Makes several contacts with the 16S rRNA in the 70S ribosome. This Streptomyces griseus subsp. griseus (strain JCM 4626 / CBS 651.72 / NBRC 13350 / KCC S-0626 / ISP 5235) protein is Large ribosomal subunit protein uL2.